A 210-amino-acid polypeptide reads, in one-letter code: Probable GTP-binding protein EngB (210 aa).

The region spanning 24 to 199 is the EngB-type G domain; that stretch reads QGCEVAFAGR…WEVLGRWLDL (176 aa). GTP-binding positions include 32-39, 59-63, 77-80, 144-147, and 178-180; these read GRSNAGKS, GRTRM, DLPG, TKSD, and FSS. Ser-39 and Thr-61 together coordinate Mg(2+).

It belongs to the TRAFAC class TrmE-Era-EngA-EngB-Septin-like GTPase superfamily. EngB GTPase family. Mg(2+) serves as cofactor.

In terms of biological role, necessary for normal cell division and for the maintenance of normal septation. The sequence is that of Probable GTP-binding protein EngB from Methylococcus capsulatus (strain ATCC 33009 / NCIMB 11132 / Bath).